The following is a 490-amino-acid chain: Glutamate--tRNA ligase (490 aa).

The 'HIGH' region motif lies at P10 to G20. Positions K251–R255 match the 'KMSKS' region motif. K254 is a binding site for ATP.

Belongs to the class-I aminoacyl-tRNA synthetase family. Glutamate--tRNA ligase type 1 subfamily. As to quaternary structure, monomer.

It is found in the cytoplasm. The enzyme catalyses tRNA(Glu) + L-glutamate + ATP = L-glutamyl-tRNA(Glu) + AMP + diphosphate. Its function is as follows. Catalyzes the attachment of glutamate to tRNA(Glu) in a two-step reaction: glutamate is first activated by ATP to form Glu-AMP and then transferred to the acceptor end of tRNA(Glu). This is Glutamate--tRNA ligase from Moorella thermoacetica (strain ATCC 39073 / JCM 9320).